A 117-amino-acid polypeptide reads, in one-letter code: Putative phosphotransferase enzyme IIB component MG129 (117 aa).

Residues 1-21 traverse the membrane as a helical segment; the sequence is MKWLLWLGYIFSFGLLYLWIV. A PTS EIIB type-1 domain is found at 42–117; it reads PFKVKDFVSA…ELKKKIEDEQ (76 aa).

It is found in the membrane. In terms of biological role, the phosphoenolpyruvate-dependent sugar phosphotransferase system (PTS), a major carbohydrate active -transport system, catalyzes the phosphorylation of incoming sugar substrates concomitant with their translocation across the cell membrane. The polypeptide is Putative phosphotransferase enzyme IIB component MG129 (Mycoplasma genitalium (strain ATCC 33530 / DSM 19775 / NCTC 10195 / G37) (Mycoplasmoides genitalium)).